The following is a 1527-amino-acid chain: Lysophospholipase nte1 (1527 aa).

The Cytoplasmic portion of the chain corresponds to methionine 1 to glycine 69. The chain crosses the membrane as a helical span at residues tryptophan 70–isoleucine 90. Topologically, residues threonine 91–threonine 112 are lumenal. Residues methionine 113–isoleucine 133 traverse the membrane as a helical segment. The Cytoplasmic portion of the chain corresponds to arginine 134–isoleucine 1527. 4 disordered regions span residues alanine 240–valine 259, leucine 299–isoleucine 387, glutamate 576–arginine 596, and alanine 750–serine 785. Residues histidine 355–threonine 373 are compositionally biased toward basic and acidic residues. Residues glycine 685–valine 804 and arginine 846–arginine 966 contribute to the a nucleoside 3',5'-cyclic phosphate site. Residues arginine 761–serine 771 show a composition bias toward low complexity. Residues leucine 1224–lysine 1388 form the PNPLA domain. The short motif at glycine 1228–glycine 1233 is the GXGXXG element. A GXSXG motif is present at residues glycine 1255–glycine 1259. The active-site Nucleophile is the serine 1257. The active-site Proton acceptor is aspartate 1375. The DGA/G signature appears at aspartate 1375 to glycine 1377.

This sequence belongs to the NTE family.

It localises to the endoplasmic reticulum membrane. The enzyme catalyses a 1-acyl-sn-glycero-3-phosphocholine + H2O = sn-glycerol 3-phosphocholine + a fatty acid + H(+). With respect to regulation, inhibited by organophosphorus esters. Functionally, intracellular phospholipase B that catalyzes the double deacylation of phosphatidylcholine (PC) to glycerophosphocholine (GroPCho). Plays an important role in membrane lipid homeostasis. Responsible for the rapid PC turnover in response to inositol, elevated temperatures, or when choline is present in the growth medium. This chain is Lysophospholipase nte1 (nte1), found in Aspergillus terreus (strain NIH 2624 / FGSC A1156).